A 385-amino-acid polypeptide reads, in one-letter code: 8-amino-7-oxononanoate synthase (385 aa).

Position 23 (R23) interacts with substrate. 110 to 111 (GF) is a pyridoxal 5'-phosphate binding site. H135 is a substrate binding site. Positions 180, 208, and 234 each coordinate pyridoxal 5'-phosphate. K237 carries the N6-(pyridoxal phosphate)lysine modification. Substrate is bound at residue T350.

This sequence belongs to the class-II pyridoxal-phosphate-dependent aminotransferase family. BioF subfamily. In terms of assembly, homodimer. Requires pyridoxal 5'-phosphate as cofactor.

The enzyme catalyses 6-carboxyhexanoyl-[ACP] + L-alanine + H(+) = (8S)-8-amino-7-oxononanoate + holo-[ACP] + CO2. It participates in cofactor biosynthesis; biotin biosynthesis. In terms of biological role, catalyzes the decarboxylative condensation of pimeloyl-[acyl-carrier protein] and L-alanine to produce 8-amino-7-oxononanoate (AON), [acyl-carrier protein], and carbon dioxide. In Vibrio vulnificus (strain CMCP6), this protein is 8-amino-7-oxononanoate synthase.